We begin with the raw amino-acid sequence, 270 residues long: Decarboxylase NovR (270 aa).

This sequence belongs to the aldolase class II family.

It participates in antibiotic biosynthesis; novobiocin biosynthesis. In terms of biological role, may mediate the 2 consecutive oxidative decarboxylation steps in the biosynthesis of the prenylated hydroxybenzoic acid moiety of novobiocin, an aminocoumarin family antibiotic that targets bacterial DNA gyrases. In Streptomyces niveus (Streptomyces spheroides), this protein is Decarboxylase NovR (novR).